The following is a 341-amino-acid chain: RNA 3'-terminal phosphate cyclase (341 aa).

ATP contacts are provided by residues Q102 and 283-287 (HLADQ). Catalysis depends on H308, which acts as the Tele-AMP-histidine intermediate.

This sequence belongs to the RNA 3'-terminal cyclase family. Type 1 subfamily.

It localises to the cytoplasm. It catalyses the reaction a 3'-end 3'-phospho-ribonucleotide-RNA + ATP = a 3'-end 2',3'-cyclophospho-ribonucleotide-RNA + AMP + diphosphate. Functionally, catalyzes the conversion of 3'-phosphate to a 2',3'-cyclic phosphodiester at the end of RNA. The mechanism of action of the enzyme occurs in 3 steps: (A) adenylation of the enzyme by ATP; (B) transfer of adenylate to an RNA-N3'P to produce RNA-N3'PP5'A; (C) and attack of the adjacent 2'-hydroxyl on the 3'-phosphorus in the diester linkage to produce the cyclic end product. The biological role of this enzyme is unknown but it is likely to function in some aspects of cellular RNA processing. This chain is RNA 3'-terminal phosphate cyclase, found in Ectopseudomonas mendocina (strain ymp) (Pseudomonas mendocina).